The chain runs to 246 residues: U2 small nuclear ribonucleoprotein A' (246 aa).

LRR repeat units follow at residues 19 to 40 (RDRE…GVTR), 42 to 63 (QNDA…PLLQ), 64 to 85 (QLKT…IGHS), and 88 to 109 (ALHS…VHLS). One can recognise an LRRCT domain in the interval 122–160 (TPASREAQYREFVIWKLPQVRVLDYQRIKDKERARAKDL).

Belongs to the U2 small nuclear ribonucleoprotein A family. As to quaternary structure, associated with the spliceosome.

It localises to the nucleus. In terms of biological role, involved in pre-mRNA splicing. The protein is U2 small nuclear ribonucleoprotein A' (LEA1) of Mycosarcoma maydis (Corn smut fungus).